Consider the following 244-residue polypeptide: Deoxynucleotide monophosphate kinase (244 aa).

Lys10 contributes to the dGMP binding site. 4 residues coordinate ATP: Arg11, Gly13, Asp15, and Thr16. DGMP-binding residues include Ile36, Lys37, Arg70, Arg137, Gly144, Thr145, Val149, Trp157, Asp180, Arg182, Gln183, Glu186, and Thr213.

It belongs to the dNMP kinase family. In terms of assembly, homodimer. The cofactor is Mg(2+).

The enzyme catalyses dTMP + ATP = dTDP + ADP. It carries out the reaction dGMP + ATP = dGDP + ADP. The catalysed reaction is 5-hydroxymethyl-dCMP + ATP = 5-hydroxymethyl-dCDP + ADP. Its function is as follows. Allows the synthesis of deoxyribonucleoside triphosphates necessary for the rapid viral DNA replication. Phosphorylates dGMP, dTMP and 5-hydroxymethyl-dCMP (hmdCMP) while excluding dCMP and dAMP. The phosphorylation of 5-hydroxymethyl-dCMP represents the first step in the replacement of cytosine by hydroxymethylcytosine in new viral DNA genomes. The protein is Deoxynucleotide monophosphate kinase (1) of Escherichia phage RB69 (Bacteriophage RB69).